Reading from the N-terminus, the 458-residue chain is Exodeoxyribonuclease 7 large subunit (458 aa).

The protein belongs to the XseA family. As to quaternary structure, heterooligomer composed of large and small subunits.

Its subcellular location is the cytoplasm. It carries out the reaction Exonucleolytic cleavage in either 5'- to 3'- or 3'- to 5'-direction to yield nucleoside 5'-phosphates.. Its function is as follows. Bidirectionally degrades single-stranded DNA into large acid-insoluble oligonucleotides, which are then degraded further into small acid-soluble oligonucleotides. The sequence is that of Exodeoxyribonuclease 7 large subunit from Sodalis glossinidius (strain morsitans).